Here is a 468-residue protein sequence, read N- to C-terminus: E3 ubiquitin-protein ligase TRIM11 (468 aa).

An RING-type zinc finger spans residues 16–57 (CAICLDYFTDPVMTDCGHNFCRECIRRCWGQPEGPYACPECR). Position 85 is a phosphoserine (serine 85). Residues 87-128 (VPQGVCAAHREPLAAFCGDELRLLCAACERSGEHWAHRVRPL) form a B box-type zinc finger. Zn(2+) contacts are provided by cysteine 92, histidine 95, cysteine 114, and histidine 120. Residues 128–233 (LQDAAEDLKS…QLAELITELE (106 aa)) are a coiled coil. The B30.2/SPRY domain maps to 268 to 461 (EMRTVCRVPG…MTICRLKGGP (194 aa)). Lysine 458 participates in a covalent cross-link: Glycyl lysine isopeptide (Lys-Gly) (interchain with G-Cter in ubiquitin).

The protein belongs to the TRIM/RBCC family. Binds cytoplasmic tail of integrin alpha-1. Interacts with the HN peptide. Interacts with PHOX2B. Interacts (when autoubiquitinated) with SQSTM1/p62; promoting AIM2 recruitment to autophagosomes. Interacts with AIM2; promoting its autophagy-dependent degradation. In terms of processing, autoubiquitinated upon DNA stimulation; autoubiquitination promotes interaction with SQSTM1/p62 and recruitment of AIM2 to autophagosomes.

The protein localises to the cytoplasm. Its subcellular location is the nucleus. It carries out the reaction S-ubiquitinyl-[E2 ubiquitin-conjugating enzyme]-L-cysteine + [acceptor protein]-L-lysine = [E2 ubiquitin-conjugating enzyme]-L-cysteine + N(6)-ubiquitinyl-[acceptor protein]-L-lysine.. Its pathway is protein modification; protein ubiquitination. Functionally, E3 ubiquitin-protein ligase that promotes the degradation of insoluble ubiquitinated proteins, including insoluble PAX6, poly-Gln repeat expanded HTT and poly-Ala repeat expanded ARX. Mediates PAX6 ubiquitination leading to proteasomal degradation, thereby modulating cortical neurogenesis. May also inhibit PAX6 transcriptional activity, possibly in part by preventing the binding of PAX6 to its consensus sequences. May contribute to the regulation of the intracellular level of HN (humanin) or HN-containing proteins through the proteasomal degradation pathway. Mediates MED15 ubiquitination leading to proteasomal degradation. May contribute to the innate restriction of retroviruses. Upon overexpression, reduces HIV-1 and murine leukemia virus infectivity, by suppressing viral gene expression. Antiviral activity depends on a functional E3 ubiquitin-protein ligase domain. May regulate TRIM5 turnover via the proteasome pathway, thus counteracting the TRIM5-mediated cross-species restriction of retroviral infection at early stages of the retroviral life cycle. Acts as an inhibitor of the AIM2 inflammasome by promoting autophagy-dependent degradation of AIM2. Mechanistically, undergoes autoubiquitination upon DNA stimulation, promoting interaction with AIM2 and SQSTM1/p62, leading to AIM2 recruitment to autophagosomes. The protein is E3 ubiquitin-protein ligase TRIM11 (TRIM11) of Bos taurus (Bovine).